The primary structure comprises 1343 residues: DNA-directed RNA polymerase subunit beta (1343 aa).

Belongs to the RNA polymerase beta chain family. As to quaternary structure, the RNAP catalytic core consists of 2 alpha, 1 beta, 1 beta' and 1 omega subunit. When a sigma factor is associated with the core the holoenzyme is formed, which can initiate transcription.

The enzyme catalyses RNA(n) + a ribonucleoside 5'-triphosphate = RNA(n+1) + diphosphate. Functionally, DNA-dependent RNA polymerase catalyzes the transcription of DNA into RNA using the four ribonucleoside triphosphates as substrates. This is DNA-directed RNA polymerase subunit beta from Shewanella piezotolerans (strain WP3 / JCM 13877).